The primary structure comprises 245 residues: Pyridoxine 5'-phosphate synthase (245 aa).

A 3-amino-2-oxopropyl phosphate-binding site is contributed by asparagine 7. 9 to 10 (DH) is a binding site for 1-deoxy-D-xylulose 5-phosphate. Position 18 (arginine 18) interacts with 3-amino-2-oxopropyl phosphate. Histidine 43 serves as the catalytic Proton acceptor. 1-deoxy-D-xylulose 5-phosphate contacts are provided by arginine 45 and histidine 50. Catalysis depends on glutamate 70, which acts as the Proton acceptor. Residue threonine 100 coordinates 1-deoxy-D-xylulose 5-phosphate. Histidine 190 serves as the catalytic Proton donor. 3-amino-2-oxopropyl phosphate contacts are provided by residues glycine 191 and 212 to 213 (GH).

It belongs to the PNP synthase family. As to quaternary structure, homooctamer; tetramer of dimers.

The protein localises to the cytoplasm. The enzyme catalyses 3-amino-2-oxopropyl phosphate + 1-deoxy-D-xylulose 5-phosphate = pyridoxine 5'-phosphate + phosphate + 2 H2O + H(+). It participates in cofactor biosynthesis; pyridoxine 5'-phosphate biosynthesis; pyridoxine 5'-phosphate from D-erythrose 4-phosphate: step 5/5. Functionally, catalyzes the complicated ring closure reaction between the two acyclic compounds 1-deoxy-D-xylulose-5-phosphate (DXP) and 3-amino-2-oxopropyl phosphate (1-amino-acetone-3-phosphate or AAP) to form pyridoxine 5'-phosphate (PNP) and inorganic phosphate. This Prochlorococcus marinus (strain MIT 9313) protein is Pyridoxine 5'-phosphate synthase.